Here is an 85-residue protein sequence, read N- to C-terminus: MELKKSIGDYTETEFKKIIENIINCEGDEKKQDDNLEHFISVTEHPSGSDLIYYPEGNNDGSPEAVIKEIKEWRAANGKSGFKQG.

This sequence belongs to the colicins ColE2/ColE8/ColE9 and pyocins S1/S2 family.

The chain is Colicin-E8 immunity protein in ColE6 (imm) from Escherichia coli.